A 394-amino-acid polypeptide reads, in one-letter code: Elongation factor Tu (394 aa).

A tr-type G domain is found at 10–204; sequence KPHINIGTIG…AVDDNIPTPE (195 aa). The segment at 19 to 26 is G1; it reads GHVDHGKT. 19–26 is a binding site for GTP; sequence GHVDHGKT. Thr26 is a Mg(2+) binding site. A G2 region spans residues 60–64; that stretch reads GITIN. The tract at residues 81-84 is G3; sequence DCPG. GTP-binding positions include 81–85 and 136–139; these read DCPGH and NKID. Residues 136 to 139 are G4; it reads NKID. The G5 stretch occupies residues 174–176; it reads SAL.

It belongs to the TRAFAC class translation factor GTPase superfamily. Classic translation factor GTPase family. EF-Tu/EF-1A subfamily. As to quaternary structure, monomer.

The protein resides in the cytoplasm. It catalyses the reaction GTP + H2O = GDP + phosphate + H(+). GTP hydrolase that promotes the GTP-dependent binding of aminoacyl-tRNA to the A-site of ribosomes during protein biosynthesis. The sequence is that of Elongation factor Tu from Chlamydia trachomatis serovar L2 (strain ATCC VR-902B / DSM 19102 / 434/Bu).